Reading from the N-terminus, the 697-residue chain is Potassium channel KAT2 (697 aa).

The Cytoplasmic portion of the chain corresponds to 1–63; the sequence is MSISCTRNFF…PFDPRFRGWE (63 aa). Residues 64–84 traverse the membrane as a helical segment; the sequence is MWLVILVIYSAWICPFEFAFI. At 85-91 the chain is on the extracellular side; the sequence is TYKKDAL. Residues 92-112 form a helical membrane-spanning segment; it reads FIIDNIVNGFFAIDIILTFFV. The Cytoplasmic segment spans residues 113–134; it reads AYLDSHSYLLVDKPKKIAIRYL. A helical membrane pass occupies residues 135-155; it reads STWFAFDVCSTAPFQSLSLLF. At 156–165 the chain is on the extracellular side; it reads KYNGSEIGFR. Asparagine 158 carries an N-linked (GlcNAc...) asparagine glycan. The helical; Voltage-sensor transmembrane segment at 166-186 threads the bilayer; that stretch reads VLSMLRLWRLRRVSSLFARLE. Residues 187–200 are Cytoplasmic-facing; it reads KDIRFNYFWTRCTK. The helical transmembrane segment at 201–221 threads the bilayer; sequence LISVTLFAVHCAGCFAYLIAD. At 222–248 the chain is on the extracellular side; sequence QYHDPTKTWIGAVYPNFKETSVWSRYV. Residues 249–268 constitute an intramembrane region (pore-forming); the sequence is TALYWSITTLTTTGYGDLHA. The Extracellular portion of the chain corresponds to 269-272; sequence ENPR. A helical membrane pass occupies residues 273 to 293; the sequence is EMLFFVFFMLFNLGFTSYLIG. Over 294 to 697 the chain is Cytoplasmic; it reads NMTNLVVHWT…HLYILINENS (404 aa). 377–496 contacts a nucleoside 3',5'-cyclic phosphate; it reads LFHGVSRNFL…RVIMNNLFMK (120 aa). The KHA domain maps to 629–697; that stretch reads RVTIHLKSRD…HLYILINENS (69 aa).

The protein belongs to the potassium channel family. Plant (TC 1.A.1.4) subfamily. In terms of assembly, the potassium channel is probably composed of a homo- or heterotetrameric complex of pore-forming subunits. May interact with KAT1. Interacts with SLAC1. In terms of tissue distribution, expressed in guard cells of hypocotyls, stems leaves and petioles. Detected also in the phloem of minor veins and in flower at a lower level.

It localises to the membrane. Highly selective inward-rectifying potassium channel. This voltage-dependent channel could mediate long-term potassium influx into guard cells leading to stomatal opening. Assuming opened or closed conformations in response to the voltage difference across the membrane, the channel is activated by hyperpolarization. The channel activity is enhanced upon external acidification. This Arabidopsis thaliana (Mouse-ear cress) protein is Potassium channel KAT2 (KAT2).